The following is a 1176-amino-acid chain: Serine/threonine-protein kinase pakF (1176 aa).

Composition is skewed to low complexity over residues Met-1–Ser-19 and Asn-32–Asn-52. Disordered stretches follow at residues Met-1–Arg-231 and Leu-254–Lys-361. Positions Gln-64–His-76 are enriched in pro residues. Residues Leu-92–Ser-133 adopt a coiled-coil conformation. 3 stretches are compositionally biased toward low complexity: residues Asn-93–Asn-125, Ser-133–Gly-148, and Ser-156–Ser-172. Polar residues predominate over residues Met-173–Val-197. Over residues Asn-198–Asn-226 the composition is skewed to low complexity. A compositionally biased stretch (polar residues) spans Leu-254–Gln-289. Low complexity predominate over residues Ser-316–Asn-353. Residues Ile-370–Asp-383 form the CRIB domain. Residues Phe-394 to Leu-646 form the Protein kinase domain. ATP is bound by residues Leu-400–Val-408 and Lys-423. Residue Asp-514 is the Proton acceptor of the active site. Disordered regions lie at residues Ile-670–Leu-723, Gln-753–Leu-885, His-968–Ala-1083, and Asn-1112–Lys-1176. 2 stretches are compositionally biased toward low complexity: residues Ser-682 to Pro-693 and Ser-710 to Ser-720. Composition is skewed to acidic residues over residues Asp-767–Asp-789 and Asp-813–Ile-844. Residues Ser-812 to Leu-873 are a coiled coil. Over residues Val-852–Lys-870 the composition is skewed to basic residues. 2 stretches are compositionally biased toward polar residues: residues Leu-873–Asn-884 and His-968–Leu-985. Composition is skewed to low complexity over residues Ser-991–Ser-1044, Asn-1051–Ser-1066, and Ser-1148–Lys-1176.

It belongs to the protein kinase superfamily. STE Ser/Thr protein kinase family. STE20 subfamily. The cofactor is Mg(2+).

It carries out the reaction L-seryl-[protein] + ATP = O-phospho-L-seryl-[protein] + ADP + H(+). The enzyme catalyses L-threonyl-[protein] + ATP = O-phospho-L-threonyl-[protein] + ADP + H(+). In Dictyostelium discoideum (Social amoeba), this protein is Serine/threonine-protein kinase pakF.